The following is a 48-amino-acid chain: Large ribosomal subunit protein bL33A (48 aa).

The protein belongs to the bacterial ribosomal protein bL33 family.

The sequence is that of Large ribosomal subunit protein bL33A from Shouchella clausii (strain KSM-K16) (Alkalihalobacillus clausii).